Here is a 60-residue protein sequence, read N- to C-terminus: UPF0434 protein Ent638_1436 (60 aa).

It belongs to the UPF0434 family.

This is UPF0434 protein Ent638_1436 from Enterobacter sp. (strain 638).